The following is a 1308-amino-acid chain: Receptor tyrosine-protein kinase erbB-4 (1308 aa).

Residues 1-25 (MKPATGLWVWVSLLVAAGTVQPSDS) form the signal peptide. Residues 26 to 651 (QSVCAGTENK…STLPQHARTP (626 aa)) are Extracellular-facing. Cys-29 and Cys-56 are oxidised to a cystine. N-linked (GlcNAc...) asparagine glycosylation is found at Asn-138, Asn-174, and Asn-181. Disulfide bonds link Cys-156-Cys-186, Cys-189-Cys-197, Cys-193-Cys-205, Cys-213-Cys-221, Cys-217-Cys-229, Cys-230-Cys-238, Cys-234-Cys-246, Cys-249-Cys-258, Cys-262-Cys-289, Cys-293-Cys-304, Cys-308-Cys-323, and Cys-326-Cys-330. Asn-253 is a glycosylation site (N-linked (GlcNAc...) asparagine). Residues Asn-358, Asn-410, Asn-473, and Asn-495 are each glycosylated (N-linked (GlcNAc...) asparagine). 10 cysteine pairs are disulfide-bonded: Cys-503–Cys-512, Cys-507–Cys-520, Cys-523–Cys-532, Cys-536–Cys-552, Cys-555–Cys-569, Cys-559–Cys-577, Cys-580–Cys-589, Cys-593–Cys-614, Cys-617–Cys-625, and Cys-621–Cys-633. Asn-548 carries an N-linked (GlcNAc...) asparagine glycan. The N-linked (GlcNAc...) asparagine glycan is linked to Asn-576. Asn-620 carries an N-linked (GlcNAc...) asparagine glycan. A helical transmembrane segment spans residues 652 to 675 (LIAAGVIGGLFILVIVGLTFAVYV). The Nuclear localization signal motif lies at 676–684 (RRKSIKKKR). The Cytoplasmic segment spans residues 676–1308 (RRKSIKKKRA…PPYRHRNTVV (633 aa)). A Protein kinase domain is found at 718–985 (LKRVKVLGSG…RMARDPQRYL (268 aa)). ATP is bound by residues 724–732 (LGSGAFGTV), Lys-751, 797–799 (QLM), and 843–848 (DLAARN). Asp-843 serves as the catalytic Proton acceptor. Phosphotyrosine; by autocatalysis is present on residues Tyr-875, Tyr-1035, Tyr-1056, Tyr-1150, Tyr-1162, Tyr-1188, Tyr-1202, Tyr-1242, Tyr-1258, and Tyr-1284. 2 consecutive short sequence motifs (PPxY motif) follow at residues 1032 to 1035 (PPIY) and 1053 to 1056 (PPAY). Residues 1117-1150 (PHVQEDSSTQRYSADPTVFAPERSPRGELDEEGY) form a disordered region. Positions 1298–1301 (PPPY) match the PPxY motif 3 motif. The short motif at 1306 to 1308 (TVV) is the PDZ-binding element.

The protein belongs to the protein kinase superfamily. Tyr protein kinase family. EGF receptor subfamily. Monomer in the absence of bound ligand. Homodimer or heterodimer with another ERBB family member upon ligand binding, thus forming heterotetramers. Interacts with EGFR and ERBB2. Interacts with CBFA2T3. Interacts with DLG2 (via its PDZ domain), DLG3 (via its PDZ domain), DLG4 (via its PDZ domain) and SNTB2 (via its PDZ domain). Interacts with MUC1. Interacts (via its PPxy motifs) with WWOX. Interacts (via the PPxY motif 3 of isoform JM-A CYT-2) with YAP1 (via the WW domain 1 of isoform 1). Interacts (isoform JM-A CYT-1 and isoform JM-B CYT-1) with WWP1. Interacts (via its intracellular domain) with TRIM28. Interacts (via the intracellular domains of both CYT-1 and CYT-2 isoforms) with KAP1; the interaction does not phosphorylate KAP1 but represses ERBB4-mediated transcriptional activity. Interacts with PRPU, DDX23, MATR3, RBM15, ILF3, KAP1, U5S1, U2SURP, ITCH, HNRNPU, AP2A1, NULC, LEO1, WWP2, IGHG1, HXK1, GRB7 and SRRT. Interacts (phosphorylated isoform JM-A CYT-1 and isoform JM-B CYT-1) with PIK3R1. Interacts with SHC1. Interacts with GRB2. Interacts (soluble intracellular domain) with STAT5A. Interacts (soluble intracellular domain) with BCL2. Interacts (phosphorylated) with STAT1. In terms of processing, isoform JM-A CYT-1 and isoform JM-A CYT-2 are processed by ADAM17. Proteolytic processing in response to ligand or 12-O-tetradecanoylphorbol-13-acetate stimulation results in the production of 120 kDa soluble receptor forms and intermediate membrane-anchored 80 kDa fragments (m80HER4), which are further processed by a presenilin-dependent gamma-secretase to release a cytoplasmic intracellular domain (E4ICD; E4ICD1/s80Cyt1 or E4ICD2/s80Cyt2, depending on the isoform). Membrane-anchored 80 kDa fragments of the processed isoform JM-A CYT-1 are more readily degraded by the proteasome than fragments of isoform JM-A CYT-2, suggesting a prevalence of E4ICD2 over E4ICD1. Isoform JM-B CYT-1 and isoform JM-B CYT-2 lack the ADAM17 cleavage site and are not processed by ADAM17, precluding further processing by gamma-secretase. Post-translationally, autophosphorylated on tyrosine residues in response to ligand binding. Autophosphorylation occurs in trans, i.e. one subunit of the dimeric receptor phosphorylates tyrosine residues on the other subunit. Ligands trigger phosphorylation at specific tyrosine residues, thereby creating binding sites for scaffold proteins and effectors. Constitutively phosphorylated at a basal level when overexpressed in heterologous systems; ligand binding leads to increased phosphorylation. Phosphorylation at Tyr-1035 is important for interaction with STAT1. Phosphorylation at Tyr-1056 is important for interaction with PIK3R1. Phosphorylation at Tyr-1242 is important for interaction with SHC1. Phosphorylation at Tyr-1188 may also contribute to the interaction with SHC1. Isoform JM-A CYT-2 is constitutively phosphorylated on tyrosine residues in a ligand-independent manner. E4ICD2 but not E4ICD1 is phosphorylated on tyrosine residues. Ubiquitinated. During mitosis, the ERBB4 intracellular domain is ubiquitinated by the APC/C complex and targeted to proteasomal degradation. Isoform JM-A CYT-1 and isoform JM-B CYT-1 are ubiquitinated by WWP1. The ERBB4 intracellular domain (E4ICD1) is ubiquitinated, and this involves NEDD4. Expressed at highest levels in brain, heart, kidney, in addition to skeletal muscle, parathyroid, cerebellum, pituitary, spleen, testis and breast. Lower levels in thymus, lung, salivary gland, and pancreas. Isoform JM-A CYT-1 and isoform JM-B CYT-1 are expressed in cerebellum, but only the isoform JM-B is expressed in the heart.

The protein resides in the cell membrane. It localises to the nucleus. The protein localises to the mitochondrion. The catalysed reaction is L-tyrosyl-[protein] + ATP = O-phospho-L-tyrosyl-[protein] + ADP + H(+). With respect to regulation, binding of a cognate ligand leads to dimerization and activation by autophosphorylation on tyrosine residues. In vitro kinase activity is increased by Mg(2+). Inhibited by PD153035, lapatinib, gefitinib (iressa, ZD1839), AG1478 and BIBX1382BS. Functionally, tyrosine-protein kinase that plays an essential role as cell surface receptor for neuregulins and EGF family members and regulates development of the heart, the central nervous system and the mammary gland, gene transcription, cell proliferation, differentiation, migration and apoptosis. Required for normal cardiac muscle differentiation during embryonic development, and for postnatal cardiomyocyte proliferation. Required for normal development of the embryonic central nervous system, especially for normal neural crest cell migration and normal axon guidance. Required for mammary gland differentiation, induction of milk proteins and lactation. Acts as cell-surface receptor for the neuregulins NRG1, NRG2, NRG3 and NRG4 and the EGF family members BTC, EREG and HBEGF. Ligand binding triggers receptor dimerization and autophosphorylation at specific tyrosine residues that then serve as binding sites for scaffold proteins and effectors. Ligand specificity and signaling is modulated by alternative splicing, proteolytic processing, and by the formation of heterodimers with other ERBB family members, thereby creating multiple combinations of intracellular phosphotyrosines that trigger ligand- and context-specific cellular responses. Mediates phosphorylation of SHC1 and activation of the MAP kinases MAPK1/ERK2 and MAPK3/ERK1. Isoform JM-A CYT-1 and isoform JM-B CYT-1 phosphorylate PIK3R1, leading to the activation of phosphatidylinositol 3-kinase and AKT1 and protect cells against apoptosis. Isoform JM-A CYT-1 and isoform JM-B CYT-1 mediate reorganization of the actin cytoskeleton and promote cell migration in response to NRG1. Isoform JM-A CYT-2 and isoform JM-B CYT-2 lack the phosphotyrosine that mediates interaction with PIK3R1, and hence do not phosphorylate PIK3R1, do not protect cells against apoptosis, and do not promote reorganization of the actin cytoskeleton and cell migration. Proteolytic processing of isoform JM-A CYT-1 and isoform JM-A CYT-2 gives rise to the corresponding soluble intracellular domains (4ICD) that translocate to the nucleus, promote nuclear import of STAT5A, activation of STAT5A, mammary epithelium differentiation, cell proliferation and activation of gene expression. The ERBB4 soluble intracellular domains (4ICD) colocalize with STAT5A at the CSN2 promoter to regulate transcription of milk proteins during lactation. The ERBB4 soluble intracellular domains can also translocate to mitochondria and promote apoptosis. In Homo sapiens (Human), this protein is Receptor tyrosine-protein kinase erbB-4 (ERBB4).